Consider the following 178-residue polypeptide: N-alpha-acetyltransferase 20 (178 aa).

The 156-residue stretch at 2–157 (TTLRAFTCDD…DAYDMRKALS (156 aa)) folds into the N-acetyltransferase domain.

It belongs to the acetyltransferase family. ARD1 subfamily. As to quaternary structure, component of the N-terminal acetyltransferase B (NatB) complex which is composed of NAA20 and NAA25.

The protein localises to the cytoplasm. The protein resides in the nucleus. It carries out the reaction N-terminal L-methionyl-L-asparaginyl-[protein] + acetyl-CoA = N-terminal N(alpha)-acetyl-L-methionyl-L-asparaginyl-[protein] + CoA + H(+). It catalyses the reaction N-terminal L-methionyl-L-glutaminyl-[protein] + acetyl-CoA = N-terminal N(alpha)-acetyl-L-methionyl-L-glutaminyl-[protein] + CoA + H(+). The catalysed reaction is N-terminal L-methionyl-L-aspartyl-[protein] + acetyl-CoA = N-terminal N(alpha)-acetyl-L-methionyl-L-aspartyl-[protein] + CoA + H(+). The enzyme catalyses N-terminal L-methionyl-L-glutamyl-[protein] + acetyl-CoA = N-terminal N(alpha)-acetyl-L-methionyl-L-glutamyl-[protein] + CoA + H(+). Functionally, catalytic subunit of the NatB complex which catalyzes acetylation of the N-terminal methionine residues of peptides beginning with Met-Asp, Met-Glu, Met-Asn and Met-Gln. Proteins with cell cycle functions are overrepresented in the pool of NatB substrates. Required for maintaining the structure and function of actomyosin fibers and for proper cellular migration. The polypeptide is N-alpha-acetyltransferase 20 (NAA20) (Homo sapiens (Human)).